An 804-amino-acid polypeptide reads, in one-letter code: Leucine--tRNA ligase (804 aa).

A 'HIGH' region motif is present at residues 39–50 (PYPSGAGLHVGH). Positions 580–584 (KMSKS) match the 'KMSKS' region motif. Lysine 583 lines the ATP pocket.

The protein belongs to the class-I aminoacyl-tRNA synthetase family.

It is found in the cytoplasm. The enzyme catalyses tRNA(Leu) + L-leucine + ATP = L-leucyl-tRNA(Leu) + AMP + diphosphate. The polypeptide is Leucine--tRNA ligase (Mycoplasma mycoides subsp. mycoides SC (strain CCUG 32753 / NCTC 10114 / PG1)).